The sequence spans 146 residues: Cyanate hydratase (146 aa).

Active-site residues include arginine 87, glutamate 90, and serine 113.

It belongs to the cyanase family.

It carries out the reaction cyanate + hydrogencarbonate + 3 H(+) = NH4(+) + 2 CO2. Functionally, catalyzes the reaction of cyanate with bicarbonate to produce ammonia and carbon dioxide. In Marinomonas sp. (strain MWYL1), this protein is Cyanate hydratase.